A 411-amino-acid chain; its full sequence is Probable glutamate dehydrogenase 3 (411 aa).

K102 is an active-site residue.

It belongs to the Glu/Leu/Phe/Val dehydrogenases family.

The enzyme catalyses L-glutamate + NAD(+) + H2O = 2-oxoglutarate + NH4(+) + NADH + H(+). It carries out the reaction L-glutamate + NADP(+) + H2O = 2-oxoglutarate + NH4(+) + NADPH + H(+). The polypeptide is Probable glutamate dehydrogenase 3 (GSH3) (Arabidopsis thaliana (Mouse-ear cress)).